A 237-amino-acid chain; its full sequence is Ribosomal RNA small subunit methyltransferase G (237 aa).

Residues Gly-78, Phe-83, 129 to 130, and Arg-148 each bind S-adenosyl-L-methionine; that span reads AE. A disordered region spans residues 218-237; that stretch reads KKETPNKYPRKAGMPNKRPL.

Belongs to the methyltransferase superfamily. RNA methyltransferase RsmG family.

The protein resides in the cytoplasm. Specifically methylates the N7 position of a guanine in 16S rRNA. This is Ribosomal RNA small subunit methyltransferase G from Streptococcus pneumoniae serotype 19F (strain G54).